A 310-amino-acid polypeptide reads, in one-letter code: MTKKIVFMGTPFFAVPILKSLYEKNYIIPAVYTQPPKKSQRGQKINKSPIQIVAEDYNIDCRTPDTLKTNKEEYEYLKQLDLDLVIVVAYGQIIPKEYLNLAKKGFINIHASLLPKWRGAAPIQRSIMNLEKETGISIMKIGEKLDTGPVGNIYRIKIKDSDNAETISTKLSILASEKIIENVENIFEDKLTFKEQDDTSATYASKIEKSEGEIKWNDNAESIIGKINGLYPSPGAFFIFKDERYKILKAELGNKSGEIGEVMSNDLEISCGNQKSIKIIEIQRQGKKPQNINEFVLGSQIIKGSRITNV.

Residue 112–115 participates in (6S)-5,6,7,8-tetrahydrofolate binding; sequence SLLP.

The protein belongs to the Fmt family.

It catalyses the reaction L-methionyl-tRNA(fMet) + (6R)-10-formyltetrahydrofolate = N-formyl-L-methionyl-tRNA(fMet) + (6S)-5,6,7,8-tetrahydrofolate + H(+). Functionally, attaches a formyl group to the free amino group of methionyl-tRNA(fMet). The formyl group appears to play a dual role in the initiator identity of N-formylmethionyl-tRNA by promoting its recognition by IF2 and preventing the misappropriation of this tRNA by the elongation apparatus. The polypeptide is Methionyl-tRNA formyltransferase (Pelagibacter ubique (strain HTCC1062)).